A 551-amino-acid chain; its full sequence is Putative transport protein HI_0035 (551 aa).

A run of 5 helical transmembrane segments spans residues 4–24, 28–48, 65–85, 95–115, and 157–177; these read IAITISLLALVAVIGLWIGHW, GVGLGIGGVLFGGIIVAHFTN, FGLILFVYTIGIQVGPGFFSS, AFAILIILLGSIAVVLVHKIA, and VSYAMAYPFGICGILLAMWLI. RCK C-terminal domains lie at 191 to 275 and 277 to 360; these read RFNA…IIGH and VDAP…VIGN. Helical transmembrane passes span 370-390, 402-424, 438-458, 463-483, 492-512, and 529-549; these read MLPVFIGIGLGVLVGSIPFYI, AGGPLVVALILARIGTIGKLYWF, IVLFLAVVGLKSGGSFFDTLV, LEWMGYGIFITFVPLIIVGTI, YLTICGLLAGSMTDPPALAFA, and VYPLVMFLRIMSPQLLAVLLW.

The protein belongs to the AAE transporter (TC 2.A.81) family. YidE subfamily.

Its subcellular location is the cell membrane. This is Putative transport protein HI_0035 from Haemophilus influenzae (strain ATCC 51907 / DSM 11121 / KW20 / Rd).